The primary structure comprises 631 residues: Coiled-coil domain-containing protein 93 (631 aa).

2 disordered regions span residues 1-23 (MGLPRGPEGQGLPEVETREDEEQ) and 214-243 (QSKMEKAEDKKTALPAGLSATEKADAHEED). The tract at residues 1-430 (MGLPRGPEGQ…LKAERAPRGD (430 aa)) is sufficient for interaction with CCDC22. Residues 215–225 (SKMEKAEDKKT) are compositionally biased toward basic and acidic residues. S298, S301, and S305 each carry phosphoserine. The stretch at 309-631 (LGTSQLHRRK…LLSKVKAKAS (323 aa)) forms a coiled coil. Residues 421–433 (LKAERAPRGDEKT) are compositionally biased toward basic and acidic residues. Residues 421–447 (LKAERAPRGDEKTLSSGEPPGTLTSAM) are disordered. Residues 448–631 (THDEDLDRRY…LLSKVKAKAS (184 aa)) form a sufficient for interaction with WASHC2C region.

Belongs to the CCDC93 family. As to quaternary structure, component of the commander complex consisting of the CCC subcomplex and the retriever subcomplex. Component of the CCC (COMMD/CCDC22/CCDC93) subcomplex consisting of COMMD1, COMMD2, COMMD3, COMMD4, COMMD5, COMMD6, COMMD7, COMMD8, COMMD9, COMMD10, CCDC22 and CCDC93. Forms a coiled-coil heterodimer with CCDC22; this heterodimer interacts with the guanine nucleotide exchange factor DENND10; the interaction is direct. Interacts with WASHC1. Interacts directly with WASHC2C. Interacts with SNX17 and SNX31.

It is found in the early endosome. Functionally, component of the commander complex that is essential for endosomal recycling of transmembrane cargos; the commander complex is composed of composed of the CCC subcomplex and the retriever subcomplex. Component of the CCC complex, which is involved in the regulation of endosomal recycling of surface proteins, including integrins, signaling receptor and channels. The CCC complex associates with SNX17, retriever and WASH complexes to prevent lysosomal degradation and promote cell surface recycling of numerous cargos such as integrins ITGA5:ITGB1. Involved in copper-dependent ATP7A trafficking between the trans-Golgi network and vesicles in the cell periphery; the function is proposed to depend on its association within the CCC complex and cooperation with the WASH complex on early endosomes and is dependent on its interaction with WASHC2C. In terms of biological role, (Microbial infection) The CCC complex, in collaboration with the heterotrimeric retriever complex, mediates the exit of human papillomavirus to the cell surface. This chain is Coiled-coil domain-containing protein 93 (CCDC93), found in Homo sapiens (Human).